Here is a 242-residue protein sequence, read N- to C-terminus: uncharacterized protein (242 aa).

The next 3 helical transmembrane spans lie at 75-95, 116-136, and 176-196; these read YAIFHIFLPFILTLLLYHNFY, IVLIFTYVMTVIIVYFSFSLI, and IQGLAHIILSLLLFILGLEVI. A disordered region spans residues 204 to 242; that stretch reads DVEMSSMRGQAITTEPASDNTMAEGTDCNTSKDVESGSS. Positions 210–232 are enriched in polar residues; it reads MRGQAITTEPASDNTMAEGTDCN. A compositionally biased stretch (basic and acidic residues) spans 233-242; that stretch reads TSKDVESGSS.

It is found in the cytoplasm. It localises to the membrane. This is an uncharacterized protein from Schizosaccharomyces pombe (strain 972 / ATCC 24843) (Fission yeast).